We begin with the raw amino-acid sequence, 147 residues long: FAD synthase (147 aa).

ATP contacts are provided by residues Thr-13–Phe-14, His-18–His-21, Asp-100, and Phe-127.

This sequence belongs to the archaeal FAD synthase family. In terms of assembly, homodimer. A divalent metal cation is required as a cofactor.

It catalyses the reaction FMN + ATP + H(+) = FAD + diphosphate. The protein operates within cofactor biosynthesis; FAD biosynthesis; FAD from FMN: step 1/1. Catalyzes the transfer of the AMP portion of ATP to flavin mononucleotide (FMN) to produce flavin adenine dinucleotide (FAD) coenzyme. The chain is FAD synthase from Korarchaeum cryptofilum (strain OPF8).